Reading from the N-terminus, the 318-residue chain is NADH-ubiquinone oxidoreductase chain 1 (318 aa).

The next 8 membrane-spanning stretches (helical) occupy residues 2–22 (PVIN…FLML), 69–89 (ILYI…WTPL), 100–120 (LGLL…LWSG), 146–166 (LALI…STLI), 171–191 (HSWL…STLA), 222–242 (LFFM…AMIF), 253–273 (ELHT…FLWI), and 294–314 (LPLT…TSGI).

The protein belongs to the complex I subunit 1 family. As to quaternary structure, core subunit of respiratory chain NADH dehydrogenase (Complex I) which is composed of 45 different subunits.

It localises to the mitochondrion inner membrane. The enzyme catalyses a ubiquinone + NADH + 5 H(+)(in) = a ubiquinol + NAD(+) + 4 H(+)(out). Its function is as follows. Core subunit of the mitochondrial membrane respiratory chain NADH dehydrogenase (Complex I) which catalyzes electron transfer from NADH through the respiratory chain, using ubiquinone as an electron acceptor. Essential for the catalytic activity and assembly of complex I. This chain is NADH-ubiquinone oxidoreductase chain 1 (MT-ND1), found in Pongo pygmaeus (Bornean orangutan).